Consider the following 513-residue polypeptide: Probable WRKY transcription factor 3 (513 aa).

Basic and acidic residues predominate over residues 1 to 11 (MAEKEEKEPSK). Disordered regions lie at residues 1 to 26 (MAEK…ISLP), 175 to 281 (NVHM…PACP), and 297 to 394 (IIYK…VASS). Positions 179–201 (QQSQQSEYPSSTQQQQQQQQQAS) are enriched in low complexity. A compositionally biased stretch (polar residues) spans 202-228 (LTEIPSFSSAPRSQIRASVQETSQGQR). Residues 229–240 (ETSEISVFEHRS) show a composition bias toward basic and acidic residues. The WRKY 1 DNA-binding region spans 244 to 308 (NADKPADDGY…YKGQHNHELP (65 aa)). Polar residues-rich tracts occupy residues 311 to 335 (RGNN…SSLN) and 343 to 355 (TSQV…MSEA). Positions 368-387 (VGERHEDEPDPKRRNTEVRV) are enriched in basic and acidic residues. The segment at residues 409-474 (SEVDLLDDGY…YEGKHNHDVP (66 aa)) is a DNA-binding region (WRKY 2).

In terms of tissue distribution, in young, mature and senescent leaves.

It is found in the nucleus. Transcription factor. Interacts specifically with the W box (5'-(T)TGAC[CT]-3'), a frequently occurring elicitor-responsive cis-acting element. The chain is Probable WRKY transcription factor 3 (WRKY3) from Arabidopsis thaliana (Mouse-ear cress).